We begin with the raw amino-acid sequence, 133 residues long: Small ribosomal subunit protein uS8 (133 aa).

This sequence belongs to the universal ribosomal protein uS8 family. As to quaternary structure, part of the 30S ribosomal subunit.

Functionally, one of the primary rRNA binding proteins, it binds directly to 16S rRNA central domain where it helps coordinate assembly of the platform of the 30S subunit. This chain is Small ribosomal subunit protein uS8, found in Saccharolobus solfataricus (strain ATCC 35092 / DSM 1617 / JCM 11322 / P2) (Sulfolobus solfataricus).